Reading from the N-terminus, the 1433-residue chain is Probable serine/threonine-protein kinase DDB_G0277989 (1433 aa).

ATP-binding positions include 1–4 and lysine 41; that span reads MNEI. One can recognise a Protein kinase 1 domain in the interval 1 to 272; that stretch reads MNEIIVGEYK…EFDDFTHPLS (272 aa). Catalysis depends on aspartate 151, which acts as the Proton acceptor. Low complexity-rich tracts occupy residues 332 to 362 and 533 to 550; these read NNNN…NNNN and TATT…TTTA. 2 disordered regions span residues 332–366 and 521–550; these read NNNN…SDGP and PSSE…TTTA. The 257-residue stretch at 1177 to 1433 folds into the Protein kinase 2 domain; that stretch reads IYDKRYYIQK…QPHVCKSFKK (257 aa).

It belongs to the protein kinase superfamily. Ser/Thr protein kinase family.

It catalyses the reaction L-seryl-[protein] + ATP = O-phospho-L-seryl-[protein] + ADP + H(+). It carries out the reaction L-threonyl-[protein] + ATP = O-phospho-L-threonyl-[protein] + ADP + H(+). In Dictyostelium discoideum (Social amoeba), this protein is Probable serine/threonine-protein kinase DDB_G0277989.